Here is a 237-residue protein sequence, read N- to C-terminus: Ribose-5-phosphate isomerase A (237 aa).

Substrate contacts are provided by residues 33-36 (TGST), 88-91 (DGAD), and 101-104 (KGRG). E110 (proton acceptor) is an active-site residue. Residue K128 coordinates substrate.

Belongs to the ribose 5-phosphate isomerase family. As to quaternary structure, homodimer.

The enzyme catalyses aldehydo-D-ribose 5-phosphate = D-ribulose 5-phosphate. The protein operates within carbohydrate degradation; pentose phosphate pathway; D-ribose 5-phosphate from D-ribulose 5-phosphate (non-oxidative stage): step 1/1. Catalyzes the reversible conversion of ribose-5-phosphate to ribulose 5-phosphate. In Methanoregula boonei (strain DSM 21154 / JCM 14090 / 6A8), this protein is Ribose-5-phosphate isomerase A.